A 272-amino-acid polypeptide reads, in one-letter code: HMP-PP phosphatase (272 aa).

Aspartate 8 functions as the Nucleophile in the catalytic mechanism. Residues aspartate 8, aspartate 10, and aspartate 212 each coordinate Mg(2+).

The protein belongs to the HAD-like hydrolase superfamily. Cof family. The cofactor is Mg(2+).

The enzyme catalyses 4-amino-2-methyl-5-(diphosphooxymethyl)pyrimidine + H2O = 4-amino-2-methyl-5-(phosphooxymethyl)pyrimidine + phosphate + H(+). Its function is as follows. Catalyzes the hydrolysis of 4-amino-2-methyl-5-hydroxymethylpyrimidine pyrophosphate (HMP-PP) to 4-amino-2-methyl-5-hydroxymethylpyrimidine phosphate (HMP-P). The sequence is that of HMP-PP phosphatase from Escherichia coli (strain K12 / MC4100 / BW2952).